We begin with the raw amino-acid sequence, 146 residues long: Hemoglobin subunit beta (146 aa).

Val-1 carries the post-translational modification N-acetylvaline. Positions His-2–His-146 constitute a Globin domain. At Thr-12 the chain carries Phosphothreonine. Ser-44 carries the phosphoserine modification. Lys-59 is subject to N6-acetyllysine. His-63 lines the heme b pocket. The residue at position 82 (Lys-82) is an N6-acetyllysine. His-92 is a binding site for heme b. At Cys-93 the chain carries S-nitrosocysteine. Position 144 is an N6-acetyllysine (Lys-144).

Belongs to the globin family. As to quaternary structure, heterotetramer of two alpha chains and two beta chains. Red blood cells.

Functionally, involved in oxygen transport from the lung to the various peripheral tissues. This chain is Hemoglobin subunit beta (HBB), found in Theropithecus gelada (Gelada baboon).